Consider the following 46-residue polypeptide: uncharacterized protein (46 aa).

It is found in the plastid. Its subcellular location is the chloroplast. This is an uncharacterized protein from Trieres chinensis (Marine centric diatom).